The sequence spans 403 residues: Chorismate synthase (403 aa).

The NADP(+) site is built by Arg40 and Arg46. Residues 140-142 (RSS) and 261-262 (QA) each bind FMN. Residues 277-298 (RRGSEAHDEMVRTDEGVDRETN) show a composition bias toward basic and acidic residues. Residues 277–307 (RRGSEAHDEMVRTDEGVDRETNRAGGLEGGM) are disordered. FMN-binding positions include Gly305, 320 to 324 (KPIST), and Arg346.

This sequence belongs to the chorismate synthase family. In terms of assembly, homotetramer. It depends on FMNH2 as a cofactor.

It catalyses the reaction 5-O-(1-carboxyvinyl)-3-phosphoshikimate = chorismate + phosphate. The protein operates within metabolic intermediate biosynthesis; chorismate biosynthesis; chorismate from D-erythrose 4-phosphate and phosphoenolpyruvate: step 7/7. In terms of biological role, catalyzes the anti-1,4-elimination of the C-3 phosphate and the C-6 proR hydrogen from 5-enolpyruvylshikimate-3-phosphate (EPSP) to yield chorismate, which is the branch point compound that serves as the starting substrate for the three terminal pathways of aromatic amino acid biosynthesis. This reaction introduces a second double bond into the aromatic ring system. The polypeptide is Chorismate synthase (Corynebacterium aurimucosum (strain ATCC 700975 / DSM 44827 / CIP 107346 / CN-1) (Corynebacterium nigricans)).